Consider the following 331-residue polypeptide: Probable allantoicase (331 aa).

This sequence belongs to the allantoicase family.

It carries out the reaction allantoate + H2O = (S)-ureidoglycolate + urea. It functions in the pathway nitrogen metabolism; (S)-allantoin degradation; (S)-ureidoglycolate from allantoate (aminidohydrolase route): step 1/1. The protein is Probable allantoicase of Pseudomonas syringae pv. tomato (strain ATCC BAA-871 / DC3000).